The sequence spans 322 residues: Eukaryotic translation initiation factor 3 subunit I (322 aa).

WD repeat units lie at residues 4–43, 46–85, 141–180, 184–223, and 281–322; these read GHER…RLGT, GHQG…VIAS, MTES…KVVD, DHSA…CLKS, and GHFG…NIFE.

The protein belongs to the eIF-3 subunit I family. As to quaternary structure, component of the eukaryotic translation initiation factor 3 (eIF-3) complex. The eIF-3 complex interacts with pix.

The protein resides in the cytoplasm. Component of the eukaryotic translation initiation factor 3 (eIF-3) complex, which is involved in protein synthesis of a specialized repertoire of mRNAs and, together with other initiation factors, stimulates binding of mRNA and methionyl-tRNAi to the 40S ribosome. The eIF-3 complex specifically targets and initiates translation of a subset of mRNAs involved in cell proliferation. This Drosophila yakuba (Fruit fly) protein is Eukaryotic translation initiation factor 3 subunit I.